A 160-amino-acid chain; its full sequence is MPSFDVVSEVDKHELTNAVDQANRELSTRFDFKGTNASFELEGYVVTQVAPSAFQLKQMLDILRGRLSARSIDVRCMDVADPLENLGGARQKVTIKQGIEQAIAKKLIAAIKASKVKVESQINGEKLRITGKKRDDLQAVIALLRKTDVDLPLQFENFRD.

Belongs to the YajQ family.

Nucleotide-binding protein. This Bordetella pertussis (strain Tohama I / ATCC BAA-589 / NCTC 13251) protein is Nucleotide-binding protein BP2916.